We begin with the raw amino-acid sequence, 220 residues long: tRNA (guanine-N(7)-)-methyltransferase (220 aa).

E44, E69, N96, and D118 together coordinate S-adenosyl-L-methionine. D118 is a catalytic residue. K122 lines the substrate pocket. Residues 124–129 (RHEKRR) are interaction with RNA. Substrate is bound by residues D154 and 191–194 (TEYE).

The protein belongs to the class I-like SAM-binding methyltransferase superfamily. TrmB family.

The catalysed reaction is guanosine(46) in tRNA + S-adenosyl-L-methionine = N(7)-methylguanosine(46) in tRNA + S-adenosyl-L-homocysteine. It functions in the pathway tRNA modification; N(7)-methylguanine-tRNA biosynthesis. In terms of biological role, catalyzes the formation of N(7)-methylguanine at position 46 (m7G46) in tRNA. This Geobacillus sp. (strain WCH70) protein is tRNA (guanine-N(7)-)-methyltransferase.